Reading from the N-terminus, the 490-residue chain is Cyclin-T1-3 (490 aa).

2 disordered regions span residues 275–391 (RVAP…GDVA) and 414–490 (AAED…RLRS). 2 stretches are compositionally biased toward polar residues: residues 282-298 (QGNDTEGSSASVVNQRA) and 352-365 (TANSNEGPNMSSTM). 2 stretches are compositionally biased toward basic and acidic residues: residues 367–391 (AMKKIDKDKVKAALEKRRKSKGDVA) and 457–490 (QEYRSPELDNRKRKDMHEHRNYDRGERDLKRLRS).

The protein belongs to the cyclin family. Cyclin T subfamily.

The sequence is that of Cyclin-T1-3 (CYCT1-3) from Oryza sativa subsp. japonica (Rice).